The sequence spans 445 residues: Phosphoglucosamine mutase (445 aa).

Residue Ser99 is the Phosphoserine intermediate of the active site. 4 residues coordinate Mg(2+): Ser99, Asp242, Asp244, and Asp246. Ser99 carries the post-translational modification Phosphoserine.

The protein belongs to the phosphohexose mutase family. Requires Mg(2+) as cofactor. Activated by phosphorylation.

It catalyses the reaction alpha-D-glucosamine 1-phosphate = D-glucosamine 6-phosphate. Its function is as follows. Catalyzes the conversion of glucosamine-6-phosphate to glucosamine-1-phosphate. In Campylobacter lari (strain RM2100 / D67 / ATCC BAA-1060), this protein is Phosphoglucosamine mutase.